The sequence spans 367 residues: Cyclic AMP-responsive element-binding protein 3-like protein 4 (367 aa).

The required for transcriptional activation stretch occupies residues 1-52 (MELGCPELLEPPEDIFSTGSFLELGFNGPPSKVPGLQKSESDDFLNLFIDPN). Topologically, residues 1-267 (MELGCPELLE…QTSSRAAQTS (267 aa)) are cytoplasmic. The tract at residues 58–81 (ETSPGSDSGVSEDPGSPAPQAPSS) is disordered. Positions 189 to 252 (ILKKIRRKIR…ISLVAQVHQL (64 aa)) constitute a bZIP domain. The basic motif stretch occupies residues 191-230 (KKIRRKIRNKQSAQDSRRRKKEYIDGLESRVAACSEQNQK). The tract at residues 231 to 252 (LQRKVQELERQNISLVAQVHQL) is leucine-zipper. The helical; Signal-anchor for type II membrane protein transmembrane segment at 268–288 (TCVLILLFSLALIILPSFSPF) threads the bilayer. Residues 289–367 (QSQPEARSEG…IRGMVHADEM (79 aa)) are Lumenal-facing. N-linked (GlcNAc...) asparagine glycosylation occurs at asparagine 338.

It belongs to the bZIP family. ATF subfamily. As to quaternary structure, binds DNA as a dimer. Forms a heterodimer with CREM isoform Delta. Post-translationally, controlled by regulated intramembrane proteolysis (RIP). Following ER stress a fragment containing the cytoplasmic transcription factor domain is released by proteolysis. The cleavage seems to be performed sequentially by site-1 and site-2 proteases (PS1 and PS2). PS1 cleavage may be suppressed by a determinant in the C-terminal region.

It is found in the endoplasmic reticulum membrane. The protein localises to the nucleus. In terms of biological role, transcriptional activator that may play a role in the unfolded protein response. Binds to the UPR element (UPRE) but not to CRE element. Preferentially binds DNA with to the consensus sequence 5'-T[GT]ACGT[GA][GT]-3' and has transcriptional activation activity from UPRE. Binds to NF-kappa-B site and has transcriptional activation activity from NF-kappa-B-containing regulatory elements. Increases the binding of CREM isoform Delta with CRE. The CREM isoform Delta-CREB3L4 heterodimer functions through CRE but not through UPRE and may recruit HIRA to CRE to regulate histone exchange. The protein is Cyclic AMP-responsive element-binding protein 3-like protein 4 (Creb3l4) of Rattus norvegicus (Rat).